Consider the following 396-residue polypeptide: Ribosomal RNA large subunit methyltransferase I (396 aa).

One can recognise a PUA domain in the interval 2–79; that stretch reads SVFIYLVKGR…KEETVDLDFF (78 aa).

Belongs to the methyltransferase superfamily. RlmI family.

The protein localises to the cytoplasm. It carries out the reaction cytidine(1962) in 23S rRNA + S-adenosyl-L-methionine = 5-methylcytidine(1962) in 23S rRNA + S-adenosyl-L-homocysteine + H(+). In terms of biological role, specifically methylates the cytosine at position 1962 (m5C1962) of 23S rRNA. This chain is Ribosomal RNA large subunit methyltransferase I, found in Aeromonas salmonicida (strain A449).